The following is a 164-amino-acid chain: Cyclic pyranopterin monophosphate synthase (164 aa).

Substrate-binding positions include 75 to 77 (MCH) and 116 to 117 (ME). Aspartate 131 is an active-site residue.

Belongs to the MoaC family. Homohexamer; trimer of dimers.

The catalysed reaction is (8S)-3',8-cyclo-7,8-dihydroguanosine 5'-triphosphate = cyclic pyranopterin phosphate + diphosphate. It participates in cofactor biosynthesis; molybdopterin biosynthesis. Functionally, catalyzes the conversion of (8S)-3',8-cyclo-7,8-dihydroguanosine 5'-triphosphate to cyclic pyranopterin monophosphate (cPMP). This Staphylococcus aureus (strain USA300) protein is Cyclic pyranopterin monophosphate synthase.